The following is a 211-amino-acid chain: MTIRYPSGQQPPNVGRAEQPIVAPHSSSFAKRGMSLEKEINDANRYYLATEQAVIYKKPTPIQLVKVDYPKRSAAVVKEAYFKRPSTTDYNGVYQGYYVDFDAKETRGKLSFPLKNFHQHQVDHFRRCLAQGGVCFAFIRFTTLDLTYLLPASDLIAFWDQQGRGGRKSVPLTTIKDRGFRVKTGLTPVLDYLPALDQLIAANQAKGADHE.

Residues T87, D89, D102, and Q121 each contribute to the Mg(2+) site.

This sequence belongs to the RecU family. The cofactor is Mg(2+).

It localises to the cytoplasm. It carries out the reaction Endonucleolytic cleavage at a junction such as a reciprocal single-stranded crossover between two homologous DNA duplexes (Holliday junction).. In terms of biological role, endonuclease that resolves Holliday junction intermediates in genetic recombination. Cleaves mobile four-strand junctions by introducing symmetrical nicks in paired strands. Promotes annealing of linear ssDNA with homologous dsDNA. Required for DNA repair, homologous recombination and chromosome segregation. In Limosilactobacillus fermentum (strain NBRC 3956 / LMG 18251) (Lactobacillus fermentum), this protein is Holliday junction resolvase RecU.